The sequence spans 489 residues: Cytochrome P450 monooxygenase orf5 (489 aa).

A helical membrane pass occupies residues 13–35 (FVRLLAFHLIGLFVSITVYRLFF). 4 N-linked (GlcNAc...) asparagine glycosylation sites follow: Asn-37, Asn-118, Asn-171, and Asn-345. Cys-428 provides a ligand contact to heme.

The protein belongs to the cytochrome P450 family. It depends on heme as a cofactor.

It is found in the membrane. The protein operates within mycotoxin biosynthesis. Cytochrome P450 monooxygenase; part of the gene cluster that mediates the biosynthesis of brefeldin A (BFA), a protein transport inhibitor that shows antiviral, antifungal, and antitumor properties. The proposed biosynthesis of BFA involves formation of an acyclic polyketide chain that is differentially tailored throughout the backbone. The highly reducing polyketide synthase Bref-PKS is proposed to synthesize the precisely reduced octaketide precursor, which could then be directly offloaded by the thiohydrolase enzyme Bref-TH followed by a cytochrome P450 monooxygenase-mediated formation of the cyclopentane ring and macrocyclization to afford 7-deoxy BFA. Alternatively, the first ring annulation can also occur on the ACP-tethered intermediate before the thiohydrolase release and lactonization. The C7-hydroxylation by another cytochrome P450 monooxygenase is believed to be the final step in the process to obtain the final structure of BFA. In addition to the HRPKS Bref-PKS and the thiohydrolase Bref-TH, the brefeldin A biosynthesis cluster contains 4 cytochrome p450 monooxygenases (called orf3 to orf6), as well a the probable cluster-specific transcription regulator orf8. The protein is Cytochrome P450 monooxygenase orf5 of Eupenicillium brefeldianum (Penicillium brefeldianum).